A 543-amino-acid polypeptide reads, in one-letter code: Probable protein kinase UbiB (543 aa).

Residues 123–501 form the Protein kinase domain; that stretch reads DFDSQALASA…QQRQGQSRYL (379 aa). ATP contacts are provided by residues 129 to 137 and Lys-152; that span reads LASASIAQV. Asp-287 serves as the catalytic Proton acceptor. The chain crosses the membrane as a helical span at residues 517 to 539; that stretch reads LADATEVSTGFIVAGALAWFIGW.

The protein belongs to the ABC1 family. UbiB subfamily.

It is found in the cell inner membrane. It functions in the pathway cofactor biosynthesis; ubiquinone biosynthesis [regulation]. Its function is as follows. Is probably a protein kinase regulator of UbiI activity which is involved in aerobic coenzyme Q (ubiquinone) biosynthesis. This chain is Probable protein kinase UbiB, found in Yersinia pseudotuberculosis serotype O:1b (strain IP 31758).